The following is a 162-amino-acid chain: Phenazine biosynthesis protein PhzB 2 (162 aa).

Thr91 bears the Phosphothreonine mark.

It belongs to the PhzA/PhzB family.

Its function is as follows. Involved in the biosynthesis of the antibiotic phenazine, a nitrogen-containing heterocyclic molecule having important roles in virulence, competition and biological control. This Pseudomonas aeruginosa (strain UCBPP-PA14) protein is Phenazine biosynthesis protein PhzB 2 (phzB2).